The sequence spans 89 residues: Small ribosomal subunit protein uS15 (89 aa).

The protein belongs to the universal ribosomal protein uS15 family. Part of the 30S ribosomal subunit. Forms a bridge to the 50S subunit in the 70S ribosome, contacting the 23S rRNA.

In terms of biological role, one of the primary rRNA binding proteins, it binds directly to 16S rRNA where it helps nucleate assembly of the platform of the 30S subunit by binding and bridging several RNA helices of the 16S rRNA. Its function is as follows. Forms an intersubunit bridge (bridge B4) with the 23S rRNA of the 50S subunit in the ribosome. The sequence is that of Small ribosomal subunit protein uS15 from Cellvibrio japonicus (strain Ueda107) (Pseudomonas fluorescens subsp. cellulosa).